We begin with the raw amino-acid sequence, 242 residues long: UDP-2,3-diacylglucosamine hydrolase (242 aa).

The Mn(2+) site is built by Asp8, His10, Asp41, Asn79, and His114. A substrate-binding site is contributed by 79–80 (NR). Substrate-binding residues include Asp122, Lys164, Lys167, and His195. Mn(2+) is bound by residues His195 and His197.

Belongs to the LpxH family. The cofactor is Mn(2+).

Its subcellular location is the cell inner membrane. It carries out the reaction UDP-2-N,3-O-bis[(3R)-3-hydroxytetradecanoyl]-alpha-D-glucosamine + H2O = 2-N,3-O-bis[(3R)-3-hydroxytetradecanoyl]-alpha-D-glucosaminyl 1-phosphate + UMP + 2 H(+). Its pathway is glycolipid biosynthesis; lipid IV(A) biosynthesis; lipid IV(A) from (3R)-3-hydroxytetradecanoyl-[acyl-carrier-protein] and UDP-N-acetyl-alpha-D-glucosamine: step 4/6. Its function is as follows. Hydrolyzes the pyrophosphate bond of UDP-2,3-diacylglucosamine to yield 2,3-diacylglucosamine 1-phosphate (lipid X) and UMP by catalyzing the attack of water at the alpha-P atom. Involved in the biosynthesis of lipid A, a phosphorylated glycolipid that anchors the lipopolysaccharide to the outer membrane of the cell. The sequence is that of UDP-2,3-diacylglucosamine hydrolase from Vibrio cholerae serotype O1 (strain ATCC 39315 / El Tor Inaba N16961).